We begin with the raw amino-acid sequence, 718 residues long: Kinesin-2a (718 aa).

Residues 5–335 (NIKVIVRCRP…LRYADRAKQI (331 aa)) form the Kinesin motor domain. 97 to 104 (GQTGAGKT) is a binding site for ATP. Gly100, Gly102, Lys103, Thr104, and Trp105 together coordinate ADP. Mg(2+) is bound at residue Thr104. Residues 432–477 (SRKAADELEAKRRALAEAKQKRESELEQKEALNKEAIVTLTDLKSQ) are a coiled coil.

Belongs to the TRAFAC class myosin-kinesin ATPase superfamily. Kinesin family. Kinesin II subfamily. As to quaternary structure, monomer.

The protein localises to the cell projection. Its subcellular location is the cilium. It localises to the flagellum. The protein resides in the cytoplasm. It is found in the cytoskeleton. The protein localises to the flagellum axoneme. Its subcellular location is the flagellum basal body. In terms of biological role, involved in anterograde intraflagellar transport (IFT). Involved in flagellar assembly. The sequence is that of Kinesin-2a from Giardia intestinalis (strain ATCC 50803 / WB clone C6) (Giardia lamblia).